Here is a 702-residue protein sequence, read N- to C-terminus: Polyribonucleotide nucleotidyltransferase (702 aa).

Residues aspartate 485 and aspartate 491 each coordinate Mg(2+). The 60-residue stretch at 552-611 (PRITTLKINPEKIRDVIGKGGATIRALTEETGTTIELEDDGTVKIASANGEATKEAIRRI) folds into the KH domain. The region spanning 621 to 689 (GTVYNGKVVR…RQGRVRLSMK (69 aa)) is the S1 motif domain.

This sequence belongs to the polyribonucleotide nucleotidyltransferase family. As to quaternary structure, component of the RNA degradosome, which is a multiprotein complex involved in RNA processing and mRNA degradation. Requires Mg(2+) as cofactor.

It is found in the cytoplasm. It carries out the reaction RNA(n+1) + phosphate = RNA(n) + a ribonucleoside 5'-diphosphate. Involved in mRNA degradation. Catalyzes the phosphorolysis of single-stranded polyribonucleotides processively in the 3'- to 5'-direction. In Shewanella woodyi (strain ATCC 51908 / MS32), this protein is Polyribonucleotide nucleotidyltransferase.